The following is a 365-amino-acid chain: Anhydro-N-acetylmuramic acid kinase (365 aa).

Residue 9-16 (GTSLDGVD) coordinates ATP.

It belongs to the anhydro-N-acetylmuramic acid kinase family.

It carries out the reaction 1,6-anhydro-N-acetyl-beta-muramate + ATP + H2O = N-acetyl-D-muramate 6-phosphate + ADP + H(+). It participates in amino-sugar metabolism; 1,6-anhydro-N-acetylmuramate degradation. It functions in the pathway cell wall biogenesis; peptidoglycan recycling. Functionally, catalyzes the specific phosphorylation of 1,6-anhydro-N-acetylmuramic acid (anhMurNAc) with the simultaneous cleavage of the 1,6-anhydro ring, generating MurNAc-6-P. Is required for the utilization of anhMurNAc either imported from the medium or derived from its own cell wall murein, and thus plays a role in cell wall recycling. The chain is Anhydro-N-acetylmuramic acid kinase from Rhodopseudomonas palustris (strain BisB18).